We begin with the raw amino-acid sequence, 198 residues long: Ribonuclease HII (198 aa).

The region spanning 10-198 (HLVAGVDEVG…PVKRALELAS (189 aa)) is the RNase H type-2 domain. Residues Asp16, Glu17, and Asp108 each coordinate a divalent metal cation.

Belongs to the RNase HII family. Mn(2+) serves as cofactor. Requires Mg(2+) as cofactor.

It localises to the cytoplasm. It catalyses the reaction Endonucleolytic cleavage to 5'-phosphomonoester.. Functionally, endonuclease that specifically degrades the RNA of RNA-DNA hybrids. In Salmonella arizonae (strain ATCC BAA-731 / CDC346-86 / RSK2980), this protein is Ribonuclease HII.